Here is a 311-residue protein sequence, read N- to C-terminus: GTP cyclohydrolase MptA (311 aa).

This sequence belongs to the GTP cyclohydrolase IV family. Homodimer. The cofactor is Fe(2+).

It carries out the reaction GTP + H2O = 7,8-dihydroneopterin 2',3'-cyclic phosphate + formate + diphosphate + H(+). It participates in cofactor biosynthesis; 5,6,7,8-tetrahydromethanopterin biosynthesis. Converts GTP to 7,8-dihydro-D-neopterin 2',3'-cyclic phosphate, the first intermediate in the biosynthesis of coenzyme methanopterin. The polypeptide is GTP cyclohydrolase MptA (Methanocorpusculum labreanum (strain ATCC 43576 / DSM 4855 / Z)).